The primary structure comprises 483 residues: Keratin, type II cytoskeletal 7 (483 aa).

Serine 2 carries the post-translational modification N-acetylserine. Serine 2, serine 6, and serine 7 each carry phosphoserine. The head stretch occupies residues serine 2–glutamate 107. Residue serine 12 is glycosylated (O-linked (GlcNAc) serine). The segment at serine 14 to serine 37 is disordered. At arginine 20 the chain carries Dimethylated arginine; alternate. The residue at position 20 (arginine 20) is an Omega-N-methylarginine; alternate. Residues arginine 25 to serine 37 are compositionally biased toward low complexity. Serine 63 and serine 88 each carry phosphoserine. Residues glutamate 107–leucine 143 are coil 1A. The 313-residue stretch at glutamate 108–leucine 420 folds into the IF rod domain. A Phosphothreonine modification is found at threonine 114. Positions glutamine 144–histidine 161 are linker 1. Lysine 147 is covalently cross-linked (Glycyl lysine isopeptide (Lys-Gly) (interchain with G-Cter in SUMO2)). Positions isoleucine 162 to leucine 253 are coil 1B. Lysine 196 is modified (N6-acetyllysine). Residues glutamine 254–isoleucine 277 are linker 12. Phosphoserine is present on residues serine 269 and serine 271. Residues isoleucine 278–glutamate 416 form a coil 2 region. Residues lysine 282 and lysine 303 each participate in a glycyl lysine isopeptide (Lys-Gly) (interchain with G-Cter in SUMO2) cross-link. A Phosphothreonine modification is found at threonine 306. Glycyl lysine isopeptide (Lys-Gly) (interchain with G-Cter in SUMO2) cross-links involve residues lysine 313 and lysine 348. The interval glutamate 417 to asparagine 483 is tail.

It belongs to the intermediate filament family. Heterotetramer of two type I and two type II keratins. Interacts with eukaryotic translation initiator factor 3 (eIF3) subunit EIF3S10. Interacts with GPER1. In terms of processing, arg-20 is dimethylated, probably to asymmetric dimethylarginine.

Blocks interferon-dependent interphase and stimulates DNA synthesis in cells. This Potorous tridactylus (Potoroo) protein is Keratin, type II cytoskeletal 7.